A 143-amino-acid chain; its full sequence is Cofilin (143 aa).

One can recognise an ADF-H domain in the interval 5-137 (GVAVSDEALK…AYESVLEKIS (133 aa)).

Belongs to the actin-binding proteins ADF family.

It localises to the cytoplasm. Its subcellular location is the cytoskeleton. The protein resides in the nucleus matrix. Controls reversibly actin polymerization and depolymerization in a pH-sensitive manner. It has the ability to bind G- and F-actin in a 1:1 ratio of cofilin to actin. Binding to F-actin is regulated by tropomyosin. It is the major component of intranuclear and cytoplasmic actin rods. Required for accumulation of actin at the cell division site via depolymerizing actin at the cell ends. In association with myosin II has a role in the assembly of the contractile ring via severing actin filaments. Involved in the maintenance of the contractile ring once formed. In association with profilin and capping protein, has a role in the mitotic reorganization of the actin cytoskeleton. This is Cofilin (COF1) from Ogataea parapolymorpha (strain ATCC 26012 / BCRC 20466 / JCM 22074 / NRRL Y-7560 / DL-1) (Yeast).